A 306-amino-acid polypeptide reads, in one-letter code: Acetaldehyde dehydrogenase (306 aa).

Position 12–15 (12–15) interacts with NAD(+); it reads SGNI. Cysteine 127 serves as the catalytic Acyl-thioester intermediate. NAD(+)-binding positions include 158 to 166 and asparagine 277; that span reads SAGPGTRAN.

This sequence belongs to the acetaldehyde dehydrogenase family.

The enzyme catalyses acetaldehyde + NAD(+) + CoA = acetyl-CoA + NADH + H(+). The polypeptide is Acetaldehyde dehydrogenase (Mycolicibacterium gilvum (strain PYR-GCK) (Mycobacterium gilvum (strain PYR-GCK))).